We begin with the raw amino-acid sequence, 114 residues long: QDAAKGEAVFKQCMTCHRADKNMVGPALAGVVGRKAGTAPGFSYSPLNHHSGEAGLVWTQENIITYLADPNAFLKKFLTDKGHADQAVGATKMTFKLANEQQRKDVVAYLATLK.

Position 1 is a pyrrolidone carboxylic acid (glutamine 1). Heme c contacts are provided by cysteine 13, cysteine 16, histidine 17, and methionine 93.

The protein belongs to the cytochrome c family. In terms of processing, binds 1 heme c group covalently per subunit.

The protein localises to the periplasm. Its function is as follows. Cytochrome c2 is found mainly in purple, non-sulfur, photosynthetic bacteria where it functions as the electron donor to the oxidized bacteriochlorophyll in the photophosphorylation pathway. However, it may also have a role in the respiratory chain and is found in some non-photosynthetic bacteria. This is Cytochrome c2 from Rhodopseudomonas palustris.